Reading from the N-terminus, the 294-residue chain is 4-hydroxy-tetrahydrodipicolinate synthase (294 aa).

T49 contacts pyruvate. The active-site Proton donor/acceptor is Y136. Residue K164 is the Schiff-base intermediate with substrate of the active site. Residue I207 coordinates pyruvate.

The protein belongs to the DapA family. Homotetramer; dimer of dimers.

Its subcellular location is the cytoplasm. It catalyses the reaction L-aspartate 4-semialdehyde + pyruvate = (2S,4S)-4-hydroxy-2,3,4,5-tetrahydrodipicolinate + H2O + H(+). Its pathway is amino-acid biosynthesis; L-lysine biosynthesis via DAP pathway; (S)-tetrahydrodipicolinate from L-aspartate: step 3/4. Functionally, catalyzes the condensation of (S)-aspartate-beta-semialdehyde [(S)-ASA] and pyruvate to 4-hydroxy-tetrahydrodipicolinate (HTPA). This is 4-hydroxy-tetrahydrodipicolinate synthase from Natronomonas pharaonis (strain ATCC 35678 / DSM 2160 / CIP 103997 / JCM 8858 / NBRC 14720 / NCIMB 2260 / Gabara) (Halobacterium pharaonis).